Reading from the N-terminus, the 133-residue chain is MAKASNTAAQRVRKKVKKNVAEGVVHVHASFNNTIITITDRQGNALAWATSGGQGFKGSRKSTPFAAQVAAESAGRVAMEYGVKNLEVRIKGPGPGRESAVRALHGLGIKITAISDVTPIPHNGCRPPKRRRI.

Belongs to the universal ribosomal protein uS11 family. As to quaternary structure, part of the 30S ribosomal subunit. Interacts with proteins S7 and S18. Binds to IF-3.

Functionally, located on the platform of the 30S subunit, it bridges several disparate RNA helices of the 16S rRNA. Forms part of the Shine-Dalgarno cleft in the 70S ribosome. This Burkholderia pseudomallei (strain 1106a) protein is Small ribosomal subunit protein uS11.